We begin with the raw amino-acid sequence, 197 residues long: Holliday junction branch migration complex subunit RuvA (197 aa).

The interval 1–64 (MIGRLRGIVA…EDSVSLYGFL (64 aa)) is domain I. Residues 65–143 (REGERRLFRD…QFGAGGALPT (79 aa)) form a domain II region. The interval 144 to 153 (GSGPAPADPL) is flexible linker. The segment at 153–197 (LSDATVALQQLGYKPAEAARMARDAFNEGDEVATVIRKALQSALR) is domain III.

This sequence belongs to the RuvA family. In terms of assembly, homotetramer. Forms an RuvA(8)-RuvB(12)-Holliday junction (HJ) complex. HJ DNA is sandwiched between 2 RuvA tetramers; dsDNA enters through RuvA and exits via RuvB. An RuvB hexamer assembles on each DNA strand where it exits the tetramer. Each RuvB hexamer is contacted by two RuvA subunits (via domain III) on 2 adjacent RuvB subunits; this complex drives branch migration. In the full resolvosome a probable DNA-RuvA(4)-RuvB(12)-RuvC(2) complex forms which resolves the HJ.

It is found in the cytoplasm. The RuvA-RuvB-RuvC complex processes Holliday junction (HJ) DNA during genetic recombination and DNA repair, while the RuvA-RuvB complex plays an important role in the rescue of blocked DNA replication forks via replication fork reversal (RFR). RuvA specifically binds to HJ cruciform DNA, conferring on it an open structure. The RuvB hexamer acts as an ATP-dependent pump, pulling dsDNA into and through the RuvAB complex. HJ branch migration allows RuvC to scan DNA until it finds its consensus sequence, where it cleaves and resolves the cruciform DNA. In Stenotrophomonas maltophilia (strain K279a), this protein is Holliday junction branch migration complex subunit RuvA.